The primary structure comprises 387 residues: NifS-like protein (387 aa).

Residues 58-59 (SE) and 184-186 (SIN) each bind pyridoxal 5'-phosphate.

This sequence belongs to the class-V pyridoxal-phosphate-dependent aminotransferase family. NifS/IscS subfamily. Requires pyridoxal 5'-phosphate as cofactor.

It localises to the virion. The sequence is that of NifS-like protein from African swine fever virus (isolate Tick/South Africa/Pretoriuskop Pr4/1996) (ASFV).